A 332-amino-acid chain; its full sequence is Probable cation efflux system protein MT2084 (332 aa).

Transmembrane regions (helical) follow at residues 46 to 66 (ISLLVLGLTALIQIVIVVMSG), 75 to 95 (IHNFADALTAVPLWIAFALGA), 113 to 133 (AGSFVVAMITMSAIIAGYEAI), 145 to 165 (VGWVALAGLVGFIGNEWVALY), and 202 to 222 (VALGFPLADPIVGLLITAAIL).

It belongs to the cation diffusion facilitator (CDF) transporter (TC 2.A.4) family.

The protein resides in the cell membrane. The protein is Probable cation efflux system protein MT2084 of Mycobacterium tuberculosis (strain CDC 1551 / Oshkosh).